A 198-amino-acid chain; its full sequence is Phosphoheptose isomerase (198 aa).

The SIS domain maps to 34–196; that stretch reads IVEALIRGNK…DDSLFPADHG (163 aa). A substrate-binding site is contributed by 49–51; it reads NGG. Residues His58 and Asn62 each contribute to the Zn(2+) site. Residues Asn62, 91 to 92, 117 to 119, Ser122, and Gln172 contribute to the substrate site; these read ND and STS. Zn(2+) contacts are provided by Gln172 and His180.

This sequence belongs to the SIS family. GmhA subfamily. In terms of assembly, homotetramer. Zn(2+) serves as cofactor.

The protein resides in the cytoplasm. The catalysed reaction is 2 D-sedoheptulose 7-phosphate = D-glycero-alpha-D-manno-heptose 7-phosphate + D-glycero-beta-D-manno-heptose 7-phosphate. It participates in carbohydrate biosynthesis; D-glycero-D-manno-heptose 7-phosphate biosynthesis; D-glycero-alpha-D-manno-heptose 7-phosphate and D-glycero-beta-D-manno-heptose 7-phosphate from sedoheptulose 7-phosphate: step 1/1. Functionally, catalyzes the isomerization of sedoheptulose 7-phosphate in D-glycero-D-manno-heptose 7-phosphate. The sequence is that of Phosphoheptose isomerase from Alteromonas mediterranea (strain DSM 17117 / CIP 110805 / LMG 28347 / Deep ecotype).